The primary structure comprises 213 residues: High frequency lysogenization protein HflD homolog (213 aa).

Residues Q79–H122 are a coiled coil.

The protein belongs to the HflD family.

It localises to the cytoplasm. The protein resides in the cell inner membrane. The chain is High frequency lysogenization protein HflD homolog from Salmonella dublin (strain CT_02021853).